Consider the following 159-residue polypeptide: UPF0336 protein ML1910 (159 aa).

This sequence belongs to the UPF0336 family.

The protein is UPF0336 protein ML1910 of Mycobacterium leprae (strain TN).